The following is a 406-amino-acid chain: Arginine deiminase (406 aa).

Cys-396 serves as the catalytic Amidino-cysteine intermediate.

The protein belongs to the arginine deiminase family.

It is found in the cytoplasm. It carries out the reaction L-arginine + H2O = L-citrulline + NH4(+). The protein operates within amino-acid degradation; L-arginine degradation via ADI pathway; carbamoyl phosphate from L-arginine: step 1/2. The chain is Arginine deiminase from Vibrio vulnificus (strain YJ016).